The primary structure comprises 99 residues: NADH-quinone oxidoreductase subunit K (99 aa).

Transmembrane regions (helical) follow at residues 3–23 (PDNYLYLSALLFTIGAAGVLL), 28–48 (IVVFMCVELMLNAANLAFVAF), and 59–79 (VVAFFTMVVAACEVVIGLAII).

The protein belongs to the complex I subunit 4L family. As to quaternary structure, NDH-1 is composed of 14 different subunits. Subunits NuoA, H, J, K, L, M, N constitute the membrane sector of the complex.

The protein localises to the cell membrane. It carries out the reaction a quinone + NADH + 5 H(+)(in) = a quinol + NAD(+) + 4 H(+)(out). Functionally, NDH-1 shuttles electrons from NADH, via FMN and iron-sulfur (Fe-S) centers, to quinones in the respiratory chain. The immediate electron acceptor for the enzyme in this species is believed to be a menaquinone. Couples the redox reaction to proton translocation (for every two electrons transferred, four hydrogen ions are translocated across the cytoplasmic membrane), and thus conserves the redox energy in a proton gradient. The sequence is that of NADH-quinone oxidoreductase subunit K from Mycobacterium sp. (strain JLS).